A 480-amino-acid chain; its full sequence is tRNA (guanine(37)-N(1))-methyltransferase (480 aa).

Residues 1–18 (MAAVWRRSARLFILLQRH) constitute a mitochondrion transit peptide. S-adenosyl-L-methionine is bound by residues His-273, 311–312 (DL), 339–340 (DG), and Asn-367. A disordered region spans residues 458 to 480 (HTQDRDTSEEPCPKKQKCEDSTN).

Belongs to the class I-like SAM-binding methyltransferase superfamily. TRM5/TYW2 family. As to quaternary structure, monomer.

The protein resides in the mitochondrion matrix. The protein localises to the nucleus. It is found in the cytoplasm. It catalyses the reaction guanosine(37) in tRNA + S-adenosyl-L-methionine = N(1)-methylguanosine(37) in tRNA + S-adenosyl-L-homocysteine + H(+). Its function is as follows. Involved in mitochondrial tRNA methylation. Specifically methylates the N1 position of guanosine-37 in various tRNAs. Methylation is not dependent on the nature of the nucleoside 5' of the target nucleoside. This is the first step in the biosynthesis of wybutosine (yW), a modified base adjacent to the anticodon of tRNAs and required for accurate decoding. In Danio rerio (Zebrafish), this protein is tRNA (guanine(37)-N(1))-methyltransferase (trmt5).